The following is an 84-amino-acid chain: Delta-thalatoxin-Tas1a (84 aa).

The signal sequence occupies residues 1–19 (MAYLKIVLVALMLVLAVSA). Residues 20 to 33 (MRRPDQQDQDISVA) constitute a propeptide that is removed on maturation. Intrachain disulfides connect Cys-38–Cys-78, Cys-40–Cys-68, and Cys-61–Cys-79.

Belongs to the sea anemone sodium channel inhibitory toxin family. Type II subfamily.

It localises to the secreted. It is found in the nematocyst. Binds specifically to the voltage-gated sodium channel (Nav) and delays its inactivation. This chain is Delta-thalatoxin-Tas1a, found in Thalassianthus aster (Fuzzy-tipped anemone).